Here is a 151-residue protein sequence, read N- to C-terminus: D-aminoacyl-tRNA deacylase (151 aa).

The short motif at 138 to 139 is the Gly-cisPro motif, important for rejection of L-amino acids element; it reads GP.

Belongs to the DTD family. In terms of assembly, homodimer.

It is found in the cytoplasm. The catalysed reaction is glycyl-tRNA(Ala) + H2O = tRNA(Ala) + glycine + H(+). The enzyme catalyses a D-aminoacyl-tRNA + H2O = a tRNA + a D-alpha-amino acid + H(+). An aminoacyl-tRNA editing enzyme that deacylates mischarged D-aminoacyl-tRNAs. Also deacylates mischarged glycyl-tRNA(Ala), protecting cells against glycine mischarging by AlaRS. Acts via tRNA-based rather than protein-based catalysis; rejects L-amino acids rather than detecting D-amino acids in the active site. By recycling D-aminoacyl-tRNA to D-amino acids and free tRNA molecules, this enzyme counteracts the toxicity associated with the formation of D-aminoacyl-tRNA entities in vivo and helps enforce protein L-homochirality. The sequence is that of D-aminoacyl-tRNA deacylase from Magnetococcus marinus (strain ATCC BAA-1437 / JCM 17883 / MC-1).